Reading from the N-terminus, the 288-residue chain is ATP synthase gamma chain (288 aa).

Belongs to the ATPase gamma chain family. As to quaternary structure, F-type ATPases have 2 components, CF(1) - the catalytic core - and CF(0) - the membrane proton channel. CF(1) has five subunits: alpha(3), beta(3), gamma(1), delta(1), epsilon(1). CF(0) has three main subunits: a, b and c.

It localises to the cell inner membrane. Its function is as follows. Produces ATP from ADP in the presence of a proton gradient across the membrane. The gamma chain is believed to be important in regulating ATPase activity and the flow of protons through the CF(0) complex. This is ATP synthase gamma chain from Paracidovorax citrulli (strain AAC00-1) (Acidovorax citrulli).